A 163-amino-acid polypeptide reads, in one-letter code: Ribosome maturation factor RimP (163 aa).

Belongs to the RimP family.

It is found in the cytoplasm. Required for maturation of 30S ribosomal subunits. The sequence is that of Ribosome maturation factor RimP from Polynucleobacter necessarius subsp. necessarius (strain STIR1).